A 120-amino-acid polypeptide reads, in one-letter code: Large ribosomal subunit protein uL22 (120 aa).

The interval 1-25 (MFVNKKYTAKGKNLPSSPKKVRPIA) is disordered.

The protein belongs to the universal ribosomal protein uL22 family. Part of the 50S ribosomal subunit.

Functionally, this protein binds specifically to 23S rRNA; its binding is stimulated by other ribosomal proteins, e.g. L4, L17, and L20. It is important during the early stages of 50S assembly. It makes multiple contacts with different domains of the 23S rRNA in the assembled 50S subunit and ribosome. Its function is as follows. The globular domain of the protein is located near the polypeptide exit tunnel on the outside of the subunit, while an extended beta-hairpin is found that lines the wall of the exit tunnel in the center of the 70S ribosome. In Borrelia duttonii (strain Ly), this protein is Large ribosomal subunit protein uL22.